The primary structure comprises 269 residues: Formamidopyrimidine-DNA glycosylase (269 aa).

The active-site Schiff-base intermediate with DNA is proline 2. Glutamate 3 serves as the catalytic Proton donor. Residue lysine 57 is the Proton donor; for beta-elimination activity of the active site. Histidine 90, arginine 109, and lysine 150 together coordinate DNA. The segment at 235-269 (QVYGRKGEPCRVCGTPIVATKHAQRATFYCRHCQK) adopts an FPG-type zinc-finger fold. Arginine 259 functions as the Proton donor; for delta-elimination activity in the catalytic mechanism.

The protein belongs to the FPG family. Monomer. The cofactor is Zn(2+).

It carries out the reaction Hydrolysis of DNA containing ring-opened 7-methylguanine residues, releasing 2,6-diamino-4-hydroxy-5-(N-methyl)formamidopyrimidine.. The catalysed reaction is 2'-deoxyribonucleotide-(2'-deoxyribose 5'-phosphate)-2'-deoxyribonucleotide-DNA = a 3'-end 2'-deoxyribonucleotide-(2,3-dehydro-2,3-deoxyribose 5'-phosphate)-DNA + a 5'-end 5'-phospho-2'-deoxyribonucleoside-DNA + H(+). Its function is as follows. Involved in base excision repair of DNA damaged by oxidation or by mutagenic agents. Acts as a DNA glycosylase that recognizes and removes damaged bases. Has a preference for oxidized purines, such as 7,8-dihydro-8-oxoguanine (8-oxoG). Has AP (apurinic/apyrimidinic) lyase activity and introduces nicks in the DNA strand. Cleaves the DNA backbone by beta-delta elimination to generate a single-strand break at the site of the removed base with both 3'- and 5'-phosphates. The sequence is that of Formamidopyrimidine-DNA glycosylase from Salmonella dublin (strain CT_02021853).